The chain runs to 449 residues: Glutamyl-tRNA reductase (449 aa).

Substrate contacts are provided by residues 58 to 61, serine 121, 126 to 128, and glutamine 132; these read TCNR and ETQ. Catalysis depends on cysteine 59, which acts as the Nucleophile. An NADP(+)-binding site is contributed by 203–208; it reads GLGEMA.

Belongs to the glutamyl-tRNA reductase family. Homodimer.

It catalyses the reaction (S)-4-amino-5-oxopentanoate + tRNA(Glu) + NADP(+) = L-glutamyl-tRNA(Glu) + NADPH + H(+). It participates in porphyrin-containing compound metabolism; protoporphyrin-IX biosynthesis; 5-aminolevulinate from L-glutamyl-tRNA(Glu): step 1/2. Catalyzes the NADPH-dependent reduction of glutamyl-tRNA(Glu) to glutamate 1-semialdehyde (GSA). The chain is Glutamyl-tRNA reductase from Helicobacter pylori (strain Shi470).